Reading from the N-terminus, the 97-residue chain is Defensin alpha 4 (97 aa).

Residues 1–19 form the signal peptide; sequence MRIIAILAAILLVALQVRA. The propeptide occupies 20 to 63; the sequence is GPLQARGDEAPGQEQRGPEDQDISISFAWDKSSALQVSGSTRGM. 3 disulfide bridges follow: Cys-65–Cys-93, Cys-67–Cys-82, and Cys-72–Cys-92. Asp-97 is a propeptide.

Belongs to the alpha-defensin family. Homodimer; homodimerization seems to be required for killing S.aureus, but not E.coli. Interacts with CD4. Interacts with Bacillus anthracis lef; homodimerization is required for the interaction. Post-translationally, the three-dimensional structure formed by the three intramolecular disulfide bridges is indispensable for effective bacterial killing.

The protein localises to the secreted. It localises to the cytoplasmic vesicle. Its subcellular location is the secretory vesicle. Its function is as follows. Host-defense peptide that has antimicrobial activity against Gram-negative bacteria, and to a lesser extent also against Gram-positive bacteria and fungi. Exhibits antimicrobial activity against Gram-negative E.coli and E.aerogenes and Gram-positive S.faecalis, S.aureus and B.cereus and the yeast C.albicans (in vitro). Inhibits corticotropin (ACTH)-stimulated corticosterone production (in vitro). Inhibits enzymatic activity of B.anthracis lef/anthrax lethal factor (in vitro). In Pan troglodytes (Chimpanzee), this protein is Defensin alpha 4 (DEFA4).